The primary structure comprises 510 residues: GMP synthase [glutamine-hydrolyzing] (510 aa).

The Glutamine amidotransferase type-1 domain occupies 5-195; sequence LVIVVDFGGQ…LYEICKADGD (191 aa). Cysteine 82 serves as the catalytic Nucleophile. Active-site residues include histidine 169 and glutamate 171. The GMPS ATP-PPase domain maps to 196-385; that stretch reads WTMENFLEEQ…LEMPEYLVYR (190 aa). 223 to 229 is an ATP binding site; that stretch reads SGGVDSS.

In terms of assembly, homodimer.

It carries out the reaction XMP + L-glutamine + ATP + H2O = GMP + L-glutamate + AMP + diphosphate + 2 H(+). The protein operates within purine metabolism; GMP biosynthesis; GMP from XMP (L-Gln route): step 1/1. Functionally, catalyzes the synthesis of GMP from XMP. This Finegoldia magna (strain ATCC 29328 / DSM 20472 / WAL 2508) (Peptostreptococcus magnus) protein is GMP synthase [glutamine-hydrolyzing].